Here is a 437-residue protein sequence, read N- to C-terminus: GTPase Obg (437 aa).

The Obg domain occupies 2–160 (SMFLDTAKIS…RQLELELKIL (159 aa)). The OBG-type G domain maps to 161-338 (ADVGLVGFPS…LLEATAELLA (178 aa)). GTP contacts are provided by residues 167 to 174 (GFPSVGKS), 192 to 196 (FTTIV), 214 to 217 (DLPG), 284 to 287 (NKMD), and 319 to 321 (SSL). Mg(2+) contacts are provided by Ser-174 and Thr-194. One can recognise an OCT domain in the interval 359-437 (GFAEAEKEFE…IGKFEFEFVD (79 aa)).

This sequence belongs to the TRAFAC class OBG-HflX-like GTPase superfamily. OBG GTPase family. Monomer. Mg(2+) serves as cofactor.

It localises to the cytoplasm. Its function is as follows. An essential GTPase which binds GTP, GDP and possibly (p)ppGpp with moderate affinity, with high nucleotide exchange rates and a fairly low GTP hydrolysis rate. Plays a role in control of the cell cycle, stress response, ribosome biogenesis and in those bacteria that undergo differentiation, in morphogenesis control. This Streptococcus pyogenes serotype M3 (strain ATCC BAA-595 / MGAS315) protein is GTPase Obg.